We begin with the raw amino-acid sequence, 150 residues long: SsrA-binding protein (150 aa).

This sequence belongs to the SmpB family.

The protein localises to the cytoplasm. Required for rescue of stalled ribosomes mediated by trans-translation. Binds to transfer-messenger RNA (tmRNA), required for stable association of tmRNA with ribosomes. tmRNA and SmpB together mimic tRNA shape, replacing the anticodon stem-loop with SmpB. tmRNA is encoded by the ssrA gene; the 2 termini fold to resemble tRNA(Ala) and it encodes a 'tag peptide', a short internal open reading frame. During trans-translation Ala-aminoacylated tmRNA acts like a tRNA, entering the A-site of stalled ribosomes, displacing the stalled mRNA. The ribosome then switches to translate the ORF on the tmRNA; the nascent peptide is terminated with the 'tag peptide' encoded by the tmRNA and targeted for degradation. The ribosome is freed to recommence translation, which seems to be the essential function of trans-translation. This Polynucleobacter asymbioticus (strain DSM 18221 / CIP 109841 / QLW-P1DMWA-1) (Polynucleobacter necessarius subsp. asymbioticus) protein is SsrA-binding protein.